We begin with the raw amino-acid sequence, 223 residues long: Adenylate kinase 4, mitochondrial (223 aa).

Residue 15–20 (GSGKGT) coordinates a ribonucleoside 5'-triphosphate. Positions 35 to 64 (SSGHLLRENLKTNTEVGDVAKQYLEKGLLV) are NMP. The AMP site is built by serine 36 and arginine 41. The residue at position 60 (lysine 60) is an N6-succinyllysine. AMP-binding positions include 62-64 (LLV), 89-92 (GFPR), and glutamine 96. The interval 125-162 (RRWIHPSSGRVYNLDFNPPQVLGVDDITGEPLVQQEDD) is LID. A ribonucleoside 5'-triphosphate-binding positions include arginine 126 and 135–136 (VY). Residue arginine 170 participates in AMP binding. Lysine 175 carries the post-translational modification N6-acetyllysine. N6-acetyllysine; alternate is present on residues lysine 179 and lysine 186. 2 positions are modified to N6-succinyllysine; alternate: lysine 179 and lysine 186. Threonine 199 lines the a ribonucleoside 5'-triphosphate pocket.

This sequence belongs to the adenylate kinase family. AK3 subfamily. As to quaternary structure, monomer. Interacts with SLC25A5/ANT2. In terms of tissue distribution, expressed in the pyramidal cells in the hippocampus.

It localises to the mitochondrion matrix. The catalysed reaction is a ribonucleoside 5'-phosphate + ATP = a ribonucleoside 5'-diphosphate + ADP. It carries out the reaction AMP + ATP = 2 ADP. It catalyses the reaction GTP + AMP = GDP + ADP. The enzyme catalyses CMP + ATP = CDP + ADP. The catalysed reaction is GTP + CMP = CDP + GDP. It carries out the reaction dAMP + ATP = dADP + ADP. It catalyses the reaction dCMP + ATP = dCDP + ADP. The enzyme catalyses a 2'-deoxyribonucleoside 5'-diphosphate + ATP = a 2'-deoxyribonucleoside 5'-triphosphate + ADP. The catalysed reaction is a ribonucleoside 5'-diphosphate + ATP = a ribonucleoside 5'-triphosphate + ADP. It carries out the reaction GDP + ATP = GTP + ADP. It catalyses the reaction CDP + GTP = CTP + GDP. The enzyme catalyses CDP + ATP = CTP + ADP. The catalysed reaction is UDP + ATP = UTP + ADP. It carries out the reaction GTP + UDP = UTP + GDP. It catalyses the reaction dADP + GTP = dATP + GDP. The enzyme catalyses dCDP + GTP = dCTP + GDP. The catalysed reaction is dCDP + ATP = dCTP + ADP. It carries out the reaction dGDP + ATP = dGTP + ADP. It catalyses the reaction dTDP + GTP = dTTP + GDP. The enzyme catalyses dTDP + ATP = dTTP + ADP. In terms of biological role, broad-specificity mitochondrial nucleoside phosphate kinase involved in cellular nucleotide homeostasis by catalyzing nucleoside-phosphate interconversions. Similar to other adenylate kinases, preferentially catalyzes the phosphorylation of the nucleoside monophosphate AMP with ATP as phosphate donor to produce ADP. Phosphorylates only AMP when using GTP as phosphate donor. In vitro, can also catalyze the phosphorylation of CMP, dAMP and dCMP and use GTP as an alternate phosphate donor. Moreover, exhibits a diphosphate kinase activity, producing ATP, CTP, GTP, UTP, TTP, dATP, dCTP and dGTP from the corresponding diphosphate substrates with either ATP or GTP as phosphate donors. Plays a role in controlling cellular ATP levels by regulating phosphorylation and activation of the energy sensor protein kinase AMPK. Plays a protective role in the cellular response to oxidative stress. The polypeptide is Adenylate kinase 4, mitochondrial (Rattus norvegicus (Rat)).